The sequence spans 155 residues: Small ribosomal subunit protein uS7c (155 aa).

The protein belongs to the universal ribosomal protein uS7 family. In terms of assembly, part of the 30S ribosomal subunit.

The protein resides in the plastid. The protein localises to the chloroplast. Its function is as follows. One of the primary rRNA binding proteins, it binds directly to 16S rRNA where it nucleates assembly of the head domain of the 30S subunit. This Chaetosphaeridium globosum (Charophycean green alga) protein is Small ribosomal subunit protein uS7c (rps7).